The primary structure comprises 286 residues: MQIIVPASSANLGPGFDSIGVALSLLLTVDVLGPATSWQVDHQLADLPHDESNLIVQTARQLVPDLTPHHLAVQSDIPVAHGLGSSSSAIVAGIELANQLGALHLSNEQKVAFACQLEGHPDNVAPTILGGLVIGTEVNGGFAAVKAPLPPYLFAAYIPAYNVKTKEARAALPTTLPFKEAVAASATANTLVAALFTGDYQLVGQLIEQDRFHEQARAHLVPELTQLRELGHRCGALATYLSGAGPTVMTLLKEADFPAFQAAITQAGLPGRLVPLTPHPTGVTVS.

ATP is bound at residue 78-88 (PVAHGLGSSSS).

It belongs to the GHMP kinase family. Homoserine kinase subfamily.

The protein localises to the cytoplasm. The catalysed reaction is L-homoserine + ATP = O-phospho-L-homoserine + ADP + H(+). It participates in amino-acid biosynthesis; L-threonine biosynthesis; L-threonine from L-aspartate: step 4/5. Functionally, catalyzes the ATP-dependent phosphorylation of L-homoserine to L-homoserine phosphate. This is Homoserine kinase from Limosilactobacillus fermentum (strain NBRC 3956 / LMG 18251) (Lactobacillus fermentum).